Reading from the N-terminus, the 233-residue chain is Probable RNA 2'-phosphotransferase (233 aa).

Belongs to the KptA/TPT1 family.

Functionally, removes the 2'-phosphate from RNA via an intermediate in which the phosphate is ADP-ribosylated by NAD followed by a presumed transesterification to release the RNA and generate ADP-ribose 1''-2''-cyclic phosphate (APPR&gt;P). May function as an ADP-ribosylase. In Hyperthermus butylicus (strain DSM 5456 / JCM 9403 / PLM1-5), this protein is Probable RNA 2'-phosphotransferase.